The sequence spans 1076 residues: ESX secretion system protein YueB (1076 aa).

A helical transmembrane segment spans residues 9–29 (IKLISAVIIILLLPVLFFRFI). Disordered regions lie at residues 372-404 (RLSLLKPKESDEKEDGEDTSDNKDDTDKEDIED) and 423-552 (IKDI…ETDI). Positions 423 to 439 (IKDISEGLKEPEQEKPT) are enriched in basic and acidic residues. Composition is skewed to polar residues over residues 449 to 495 (DDSP…NIET) and 503 to 522 (SKNVPEQDTNTENTGTSKTD). Residues 552-622 (ISGAKKRLNE…TKKLVDFDNN (71 aa)) are a coiled coil. Transmembrane regions (helical) follow at residues 904 to 924 (TVPPVVILVIVLISSLLIGYF), 938 to 958 (ALFGILNILVGLMISLFGLNI), 964 to 984 (DQTIKWSVFTILLLVASSAFI), 995 to 1015 (GWVASAAMILFYVAPLIDLIM), and 1040 to 1060 (TMGITVLLIITVIAVALPLII).

It belongs to the EsaA family.

The protein localises to the cell membrane. In terms of biological role, required for YukE secretion. Probable component or regulator of the ESX/ESAT-6-like secretion system (BsEss). Bacteriophage SPP1 receptor. Essential for the irreversible adsorption of the bacteriophage. The sequence is that of ESX secretion system protein YueB (yueB) from Bacillus subtilis (strain 168).